The primary structure comprises 88 residues: Phosphocarrier protein HPr (88 aa).

In terms of domain architecture, HPr spans 1 to 88 (MASKEFHIVV…ETMTKEGLAE (88 aa)). The Pros-phosphohistidine intermediate role is filled by His-15. Ser-46 carries the phosphoserine; by HPrK/P modification.

Belongs to the HPr family.

The protein localises to the cytoplasm. With respect to regulation, phosphorylation on Ser-46 inhibits the phosphoryl transfer from enzyme I to HPr. Functionally, general (non sugar-specific) component of the phosphoenolpyruvate-dependent sugar phosphotransferase system (sugar PTS). This major carbohydrate active-transport system catalyzes the phosphorylation of incoming sugar substrates concomitantly with their translocation across the cell membrane. The phosphoryl group from phosphoenolpyruvate (PEP) is transferred to the phosphoryl carrier protein HPr by enzyme I. Phospho-HPr then transfers it to the PTS EIIA domain. In terms of biological role, P-Ser-HPr interacts with the catabolite control protein A (CcpA), forming a complex that binds to DNA at the catabolite response elements cre, operator sites preceding a large number of catabolite-regulated genes. Thus, P-Ser-HPr is a corepressor in carbon catabolite repression (CCR), a mechanism that allows bacteria to coordinate and optimize the utilization of available carbon sources. P-Ser-HPr also plays a role in inducer exclusion, in which it probably interacts with several non-PTS permeases and inhibits their transport activity. The protein is Phosphocarrier protein HPr (ptsH) of Lactococcus lactis subsp. lactis (strain IL1403) (Streptococcus lactis).